The chain runs to 378 residues: Erythronate-4-phosphate dehydrogenase (378 aa).

2 residues coordinate substrate: Ser-45 and Thr-66. NAD(+) is bound by residues Asp-146 and Thr-175. Arg-208 is a catalytic residue. An NAD(+)-binding site is contributed by Asp-232. Residue Glu-237 is part of the active site. Residue His-254 is the Proton donor of the active site. Gly-257 is an NAD(+) binding site. Substrate is bound at residue Tyr-258.

Belongs to the D-isomer specific 2-hydroxyacid dehydrogenase family. PdxB subfamily. In terms of assembly, homodimer.

It is found in the cytoplasm. The enzyme catalyses 4-phospho-D-erythronate + NAD(+) = (R)-3-hydroxy-2-oxo-4-phosphooxybutanoate + NADH + H(+). It participates in cofactor biosynthesis; pyridoxine 5'-phosphate biosynthesis; pyridoxine 5'-phosphate from D-erythrose 4-phosphate: step 2/5. Its function is as follows. Catalyzes the oxidation of erythronate-4-phosphate to 3-hydroxy-2-oxo-4-phosphonooxybutanoate. The sequence is that of Erythronate-4-phosphate dehydrogenase from Escherichia coli O8 (strain IAI1).